A 508-amino-acid chain; its full sequence is MSDKTFEELGLTTWLVANCKQLGFKAPSNIQANTIPEILKGRDIIASAKTGSGKTASFAIPILNQLSEDPYGVFAVILTPTRELAVQIGEQFNAIGAPMNVNCSVVIGGIDNVTQALILDKRPHIIVATPGRLASHLNNGLKIALKFCKFLVLDEADRLLGEDFELEIASILEHLPPPEKRQTLLFSATMTKNLTKLDSIALNKPFIFEDNSKYDTVDTLKQEYIYMPAPTKDCYLVYILKKHEGSSAIVFVNNCYAVEAVKGMLNKLDIPSVSLHSFLDQKSRLAALKTFKSGKVKVLVATDVASRGLDIPDVQIVINYKLSNSSKDYIHRVGRTARFGRSGRAISFITPHDVSLIKGIEEIIKKQLELYKTDDDEVFRHLKEASTARKIVEIHLDEIEFGVKQKERRTERNELQKQLKEVNNKEKFENNNNDNNNNNKTKTTKPENKKEITKIQEQPSKSTTTTKSIEKKPTTIESKKIDKDIKRKENNFDDGEISLFKKKKITNK.

The Q motif signature appears at 4–32; the sequence is KTFEELGLTTWLVANCKQLGFKAPSNIQA. Positions 35–208 constitute a Helicase ATP-binding domain; that stretch reads IPEILKGRDI…SIALNKPFIF (174 aa). ATP is bound at residue 48-55; the sequence is AKTGSGKT. The DEAD box signature appears at 154-157; it reads DEAD. A Helicase C-terminal domain is found at 219–379; that stretch reads TLKQEYIYMP…LYKTDDDEVF (161 aa). The tract at residues 422-476 is disordered; that stretch reads VNNKEKFENNNNDNNNNNKTKTTKPENKKEITKIQEQPSKSTTTTKSIEKKPTTI. The span at 430–441 shows a compositional bias: low complexity; the sequence is NNNNDNNNNNKT. The span at 444 to 454 shows a compositional bias: basic and acidic residues; the sequence is TKPENKKEITK.

It belongs to the DEAD box helicase family. DDX49/DBP8 subfamily.

It catalyses the reaction ATP + H2O = ADP + phosphate + H(+). Its function is as follows. Probable ATP-binding RNA helicase. This Dictyostelium discoideum (Social amoeba) protein is Probable ATP-dependent RNA helicase ddx49 (ddx49).